Consider the following 174-residue polypeptide: ATP-dependent protease subunit HslV (174 aa).

Threonine 2 is an active-site residue. Glycine 157, cysteine 160, and threonine 163 together coordinate Na(+).

It belongs to the peptidase T1B family. HslV subfamily. In terms of assembly, a double ring-shaped homohexamer of HslV is capped on each side by a ring-shaped HslU homohexamer. The assembly of the HslU/HslV complex is dependent on binding of ATP.

The protein localises to the cytoplasm. It catalyses the reaction ATP-dependent cleavage of peptide bonds with broad specificity.. With respect to regulation, allosterically activated by HslU binding. In terms of biological role, protease subunit of a proteasome-like degradation complex believed to be a general protein degrading machinery. The sequence is that of ATP-dependent protease subunit HslV from Shewanella loihica (strain ATCC BAA-1088 / PV-4).